A 413-amino-acid polypeptide reads, in one-letter code: von Willebrand factor A domain-containing protein 1 (413 aa).

An N-terminal signal peptide occupies residues 1–20 (MLPWTVIGLALSLRLARSGA). Residues 32-211 (DLLFLLDSSA…ALRGSILDAM (180 aa)) form the VWFA domain. A phosphoserine mark is found at Ser72, Ser78, and Ser91. Fibronectin type-III domains follow at residues 212 to 302 (WPQQ…TLPE) and 305 to 395 (GPEL…TPEG). Residue Asn262 is glycosylated (N-linked (GlcNAc...) asparagine). The disordered stretch occupies residues 385–413 (ALSAKACTPEGERSRAPRPQPQRTGGREP).

Homodimer or homomultimer; disulfide-linked. Interacts with HSPG2. In terms of processing, N-glycosylated.

It localises to the secreted. The protein resides in the extracellular space. It is found in the extracellular matrix. Its subcellular location is the basement membrane. Its function is as follows. Promotes matrix assembly. Involved in the organization of skeletal muscles and in the formation of neuromuscular junctions. The polypeptide is von Willebrand factor A domain-containing protein 1 (VWA1) (Bos taurus (Bovine)).